Here is a 391-residue protein sequence, read N- to C-terminus: Multidrug resistance protein MdtL (391 aa).

Residues 1-3 lie on the Cytoplasmic side of the membrane; it reads MSR. The helical transmembrane segment at 4–24 threads the bilayer; sequence FLICSFALVLLYPAGIDMYLV. Topologically, residues 25 to 41 are periplasmic; that stretch reads GLPRIAADLNASEAQLH. The helical transmembrane segment at 42–62 threads the bilayer; sequence IAFSVYLAGMAAAMLFAGKVA. Over 63–68 the chain is Cytoplasmic; it reads DRSGRK. Residues 69 to 89 traverse the membrane as a helical segment; the sequence is PVAIPGAALFIIASVFCSLAE. The Periplasmic segment spans residues 90-92; the sequence is TST. A helical membrane pass occupies residues 93-113; the sequence is LFLAGRFLQGLGAGCCYVVAF. The Cytoplasmic portion of the chain corresponds to 114–130; sequence AILRDTLDDRRRAKVLS. A helical transmembrane segment spans residues 131–151; the sequence is LLNGITCIIPVLAPVLGHLIM. The Periplasmic segment spans residues 152-157; it reads LKFPWQ. The chain crosses the membrane as a helical span at residues 158–178; it reads SLFWTMAIMGIAVLMLSLFIL. The Cytoplasmic segment spans residues 179–198; sequence KETRPAAPAASDKSRENSES. Residues 199-221 form a helical membrane-spanning segment; sequence LLNRFFLSRVVITTLSVSVILTF. Residues 222-244 lie on the Periplasmic side of the membrane; it reads VNTSPVLLMEIMGFERGEYATIM. A helical membrane pass occupies residues 245-265; it reads ALTAGVSMTVSFSTPFALGIF. Residues 266–268 lie on the Cytoplasmic side of the membrane; the sequence is KPR. The helical transmembrane segment at 269-289 threads the bilayer; sequence TLMITSQVLFLAAGITLAVSP. At 290–292 the chain is on the periplasmic side; the sequence is SHA. Residues 293–313 form a helical membrane-spanning segment; that stretch reads ISLFGITLICAGFSVGFGVAM. The Cytoplasmic segment spans residues 314-330; sequence SQALGPFSLRAGVASST. The chain crosses the membrane as a helical span at residues 331 to 351; sequence LGIAQVCGSSLWIWLAAVVGI. At 352-355 the chain is on the periplasmic side; that stretch reads GAWN. The chain crosses the membrane as a helical span at residues 356 to 376; it reads MLIGILIACSIVSLLLIMFVA. Topologically, residues 377–391 are cytoplasmic; the sequence is PGRPVAAHEEIHHHA.

This sequence belongs to the major facilitator superfamily. DHA1 family. MdtL (TC 2.A.1.2.22) subfamily.

It localises to the cell inner membrane. This is Multidrug resistance protein MdtL from Shigella dysenteriae serotype 1 (strain Sd197).